Here is a 212-residue protein sequence, read N- to C-terminus: Small ribosomal subunit protein eS1 (212 aa).

Belongs to the eukaryotic ribosomal protein eS1 family.

The chain is Small ribosomal subunit protein eS1 from Ignicoccus hospitalis (strain KIN4/I / DSM 18386 / JCM 14125).